Reading from the N-terminus, the 329-residue chain is DGAT1/2-independent enzyme synthesizing storage lipids (329 aa).

The Lumenal segment spans residues 1 to 50 (MIDNNQTCAAGQDSVPYVTCMIYVLEEWLGVEQLEDYLNFANHLLWVFTP). The N-linked (GlcNAc...) asparagine glycan is linked to Asn-5. The helical transmembrane segment at 51–71 (LILLILPYFTIFLLYLTIIFL) threads the bilayer. The Cytoplasmic segment spans residues 72–120 (HIYKRKNVLKEAYSHNLWDGARKTVATLWDGHAAVWHGYEVHGMEKIPE). The helical transmembrane segment at 121 to 141 (GAALIIFYHGAIPIDFYYFMA) threads the bilayer. His-129 is a catalytic residue. At 142–329 (KIFIQKGRTC…DRFHKEQKAH (188 aa)) the chain is on the lumenal side.

Belongs to the diacylglycerol acyltransferase family. Highly divergent. As to expression, widely expressed, with highest level in the brain, followed by lung and duodenum, and lowest levels in tongue, testis, skin and ileum.

Its subcellular location is the endoplasmic reticulum membrane. It carries out the reaction a 1,2-diacylglycerol + a 1,2-diacyl-sn-glycero-3-phosphocholine = a triacylglycerol + a 1-acyl-sn-glycero-3-phosphocholine. It catalyses the reaction a 1-O-alkyl-2-acyl-sn-glycero-3-phosphocholine + a 1,2-diacylglycerol = a 1-O-alkyl-sn-glycero-3-phosphocholine + a triacylglycerol. The catalysed reaction is a 2-acylglycerol + an acyl-CoA = a 1,2-diacylglycerol + CoA. The enzyme catalyses an acyl-CoA + a 1,2-diacyl-sn-glycerol = a triacyl-sn-glycerol + CoA. It carries out the reaction 2-(9Z-octadecenoyl)-glycerol + (9Z)-octadecenoyl-CoA = 1,2-di-(9Z-octadecenoyl)-glycerol + CoA. It catalyses the reaction 1,2-di-(9Z-octadecenoyl)-sn-glycerol + (9Z)-octadecenoyl-CoA = 1,2,3-tri-(9Z-octadecenoyl)-glycerol + CoA. Its activity is regulated as follows. Acyltransferase activity is specifically inhibited by TMX1 at the endoplasmic reticulum, restricting accumulation of triacylglycerol. Its function is as follows. Catalytic subunit of the alternative triglyceride biosynthesis pathway, which mediates formation of triacylglycerol from diacylglycerol and membrane phospholipids. Synthesizes triacylglycerol at the expense of membrane phospholipids, such as phosphatidylcholine (PC) and its ether-linked form (ePC), thereby altering the composition of membranes. The alternative triglyceride biosynthesis pathway is probably required to provide the energy required for rapid growth when fuel sources are limiting. It maintains mitochondrial function during periods of extracellular lipid starvation. Can also use acyl-CoA as donor: acts as a acyl-CoA:monoacylglycerol acyltransferase (MGAT), but also shows acyl-CoA:diacylglycerol acyltransferase (DGAT) activity. This is DGAT1/2-independent enzyme synthesizing storage lipids from Mus musculus (Mouse).